The primary structure comprises 251 residues: Triosephosphate isomerase (251 aa).

A substrate-binding site is contributed by 9 to 11 (NWK). H95 functions as the Electrophile in the catalytic mechanism. Catalysis depends on E167, which acts as the Proton acceptor. Substrate is bound by residues G173, S213, and 234–235 (GG). S213 is modified (phosphoserine).

It belongs to the triosephosphate isomerase family. Homodimer.

It localises to the cytoplasm. The enzyme catalyses D-glyceraldehyde 3-phosphate = dihydroxyacetone phosphate. It participates in carbohydrate biosynthesis; gluconeogenesis. Its pathway is carbohydrate degradation; glycolysis; D-glyceraldehyde 3-phosphate from glycerone phosphate: step 1/1. Functionally, involved in the gluconeogenesis. Catalyzes stereospecifically the conversion of dihydroxyacetone phosphate (DHAP) to D-glyceraldehyde-3-phosphate (G3P). This is Triosephosphate isomerase from Halalkalibacterium halodurans (strain ATCC BAA-125 / DSM 18197 / FERM 7344 / JCM 9153 / C-125) (Bacillus halodurans).